A 249-amino-acid polypeptide reads, in one-letter code: Adenylate kinase (249 aa).

Residue 43 to 48 (GAGKGT) coordinates ATP. The interval 63-92 (ATGDMLRAQVAAKTALGVEAKKIMDQGGLV) is NMP. Residues T64, R69, 90–92 (GLV), 119–122 (GFPR), and Q126 contribute to the AMP site. Positions 160-197 (GRLVHPASGRSYHKLFNPPKKNMIDDITGEPLVQRSDD) are LID. ATP contacts are provided by residues R161 and 170–171 (SY). The AMP site is built by R194 and R205. Q233 contributes to the ATP binding site.

This sequence belongs to the adenylate kinase family. AK2 subfamily. In terms of assembly, monomer.

The protein resides in the cytoplasm. It is found in the cytosol. The protein localises to the mitochondrion intermembrane space. It carries out the reaction AMP + ATP = 2 ADP. Catalyzes the reversible transfer of the terminal phosphate group between ATP and AMP. Plays an important role in cellular energy homeostasis and in adenine nucleotide metabolism. Adenylate kinase activity is critical for regulation of the phosphate utilization and the AMP de novo biosynthesis pathways. The polypeptide is Adenylate kinase (Scheffersomyces stipitis (strain ATCC 58785 / CBS 6054 / NBRC 10063 / NRRL Y-11545) (Yeast)).